We begin with the raw amino-acid sequence, 512 residues long: MTGFYFAAESSWSPYVILVLALAAMVANRLVRPKRPNDGLNHIPMLEFEDGDNSTERYIRDTWALLHAGYLKYTKRGMPFQMRNPADPDHPQVVLPAKYLSELKSAPESRFSFRLYSEQAFLLNYSHAPKQTDRTTHMVRTEMNKNMGALLEATQEEIEVALASKLPNSTAWEPATPYMALAYTTSRAIARVLGGRELSGSEEWIGMNVGVTGMTHQAAQQIREQYPPHLRWMARWRHPGARAVIATRRRSAQIVDPIIQKRLAGAQDTKPGEPDGIQWMLAAQGSRRPSAQEVADEQLFVGIASVHTTSATSLSILYDLLDRPNVAEEIIGEINAVAARHRDVGGRWTKQALSELEKLDSFMAESFRFNPVGLVTMQRSAVVDYVFQDGLRLPKHTQILFPTCEFNRDGDVHPNPDVFDPWRFLKMRKAGDPNKHHFAYVSDQMVGFGGGTHACPGRYFASYEIKLILIHMLTRYDIKWPDGLTRPPNMVHDFSNVPNFTATVLFRNKSKS.

Residues 5–27 form a helical membrane-spanning segment; the sequence is YFAAESSWSPYVILVLALAAMVA. Asparagine 53, asparagine 124, and asparagine 168 each carry an N-linked (GlcNAc...) asparagine glycan. Cysteine 455 is a heme binding site. Asparagine 499 and asparagine 508 each carry an N-linked (GlcNAc...) asparagine glycan.

It belongs to the cytochrome P450 family. Heme is required as a cofactor.

Its subcellular location is the membrane. The protein operates within secondary metabolite biosynthesis. In terms of biological role, cytochrome P450 monooxygenase; part of the gene cluster that mediates the biosynthesis of chaetoglobosin A which has a unique inhibitory activity against actin polymerization in mammalian cells. Chaetoglobosin A and its intermediates are involved in the morphological differentiation of C.globosum. The first step of the pathway is the synthesis of prochaetoglobosin I via condensation of one acetyl-CoA, 8 malonyl-CoA, and a L-tryptophan molecule by the PKS-NRPS hybrid synthetase cheA, followed by reduction of backbone double bond to install desired geometry by the enoyl reductase cheB. Further multiple oxidation steps performed by the cytochrome P450 monooxygenases cheE and cheG, as well as by the FAD-linked oxidoreductase cheF, lead to the formation of chaetoglobosin A. Depending on the order of action of these reductases, distinct intermediates can be identified. Within the pathway, the cytochrome P450 monooxygenase cheE catalyzes a stereospecific epoxidation on prochaetoglobosin I, cytoglobosin D, and chaetoglobosin J intermediates. The FAD-linked oxidoreductase cheF performs dehydrogenation of the C-20 hydroxyl groups in the 20-dihyrochaetoglobosin A and cytoglobosin D intermediates. Finally, the cytochrome P450 monooxygenase cheG can catalyze the stereospecific dihydroxylation of prochaetoglobosin I and prochaetoglobosin IV at C-19 and C-20, respectively. The Diels-Alderase cheD may play a role in the post-PKS-NRPS biosynthetic steps catalyzing Diels-Alder cyclization. The protein is Cytochrome P450 monooxygenase cheE of Chaetomium globosum (strain ATCC 6205 / CBS 148.51 / DSM 1962 / NBRC 6347 / NRRL 1970) (Soil fungus).